The following is a 161-amino-acid chain: Protein shisa-like-2B (161 aa).

A helical membrane pass occupies residues 65-85 (IGALIGLGIAALVLLAFVISV). The interval 115-134 (QEGNSNRKSKAPRSNAASNS) is disordered.

Belongs to the shisa family.

The protein resides in the membrane. This Bos taurus (Bovine) protein is Protein shisa-like-2B (SHISAL2B).